Reading from the N-terminus, the 127-residue chain is MFNTLLAVFIGGGVGSMARWLVSLKLNSASAHLPVGTLIVNLVGAFIIGLTLAFFSRMTHIDPVWKLLITTGFCGGLTTFSTFSVEVVYLIQEGKLAWAAGTILLNVAGSLAMTMLAFILVNNFASQ.

4 consecutive transmembrane segments (helical) span residues 4–24, 35–55, 71–91, and 101–121; these read TLLAVFIGGGVGSMARWLVSL, VGTLIVNLVGAFIIGLTLAFF, TGFCGGLTTFSTFSVEVVYLI, and GTILLNVAGSLAMTMLAFILV. Na(+) contacts are provided by Gly75 and Thr78.

The protein belongs to the fluoride channel Fluc/FEX (TC 1.A.43) family.

It localises to the cell inner membrane. It carries out the reaction fluoride(in) = fluoride(out). Its activity is regulated as follows. Na(+) is not transported, but it plays an essential structural role and its presence is essential for fluoride channel function. In terms of biological role, fluoride-specific ion channel. Important for reducing fluoride concentration in the cell, thus reducing its toxicity. The protein is Fluoride-specific ion channel FluC 1 of Yersinia pestis.